We begin with the raw amino-acid sequence, 469 residues long: Ribulose bisphosphate carboxylase large chain (469 aa).

Positions 1-2 are excised as a propeptide; the sequence is MS. Pro3 is subject to N-acetylproline. Lys14 carries the N6,N6,N6-trimethyllysine modification. Residues Asn123 and Thr173 each coordinate substrate. Lys175 (proton acceptor) is an active-site residue. Lys177 serves as a coordination point for substrate. Positions 201, 203, and 204 each coordinate Mg(2+). At Lys201 the chain carries N6-carboxylysine. His294 functions as the Proton acceptor in the catalytic mechanism. Positions 295, 327, and 379 each coordinate substrate.

It belongs to the RuBisCO large chain family. Type I subfamily. Heterohexadecamer of 8 large chains and 8 small chains; disulfide-linked. The disulfide link is formed within the large subunit homodimers. Mg(2+) is required as a cofactor. In terms of processing, the disulfide bond which can form in the large chain dimeric partners within the hexadecamer appears to be associated with oxidative stress and protein turnover.

It is found in the plastid. The protein resides in the chloroplast. The catalysed reaction is 2 (2R)-3-phosphoglycerate + 2 H(+) = D-ribulose 1,5-bisphosphate + CO2 + H2O. It catalyses the reaction D-ribulose 1,5-bisphosphate + O2 = 2-phosphoglycolate + (2R)-3-phosphoglycerate + 2 H(+). RuBisCO catalyzes two reactions: the carboxylation of D-ribulose 1,5-bisphosphate, the primary event in carbon dioxide fixation, as well as the oxidative fragmentation of the pentose substrate in the photorespiration process. Both reactions occur simultaneously and in competition at the same active site. The protein is Ribulose bisphosphate carboxylase large chain of Brexia madagascariensis.